The primary structure comprises 699 residues: Auxin response factor 10 (699 aa).

3 disordered regions span residues 108-136 (AAEA…DANN), 505-533 (TDLT…DDTK), and 551-595 (KNGN…SWSL). Residues 110-119 (EARREEENSR) are compositionally biased toward basic and acidic residues. Over residues 125–135 (FAKTLTQSDAN) the composition is skewed to polar residues. The segment at residues 125–227 (FAKTLTQSDA…NIHVGLRRAK (103 aa)) is a DNA-binding region (TF-B3). The span at 570 to 593 (PNTSEGSDSGVTQGSPTKNTTPSW) shows a compositional bias: polar residues. Positions 613-693 (PGQCKVFVES…RKLRILTDAG (81 aa)) constitute a PB1 domain.

This sequence belongs to the ARF family. As to quaternary structure, homodimers and heterodimers.

It is found in the nucleus. Functionally, auxin response factors (ARFs) are transcriptional factors that bind specifically to the DNA sequence 5'-TGTCTC-3' found in the auxin-responsive promoter elements (AuxREs). The sequence is that of Auxin response factor 10 (ARF10) from Oryza sativa subsp. indica (Rice).